A 482-amino-acid polypeptide reads, in one-letter code: C3a anaphylatoxin chemotactic receptor (482 aa).

Over 1 to 23 (MASFSAETNSTDLLSQPWNEPPV) the chain is Extracellular. N9 is a glycosylation site (N-linked (GlcNAc...) asparagine). The chain crosses the membrane as a helical span at residues 24–46 (ILSMVILSLTFLLGLPGNGLVLW). The Cytoplasmic segment spans residues 47-57 (VAGLKMQRTVN). A helical transmembrane segment spans residues 58 to 80 (TIWFLHLTLADLLCCLSLPFSLA). The Extracellular segment spans residues 81–96 (HLALQGQWPYGRFLCK). An intrachain disulfide couples C95 to C172. The helical transmembrane segment at 97 to 118 (LIPSIIVLNMFASVFLLTAISL) threads the bilayer. At 119-139 (DRCLVVFKPIWCQNHRNVGMA) the chain is on the cytoplasmic side. Residues 140 to 160 (CSICGCIWVVAFVMCIPVFVY) traverse the membrane as a helical segment. Residues 161–340 (REIFTTDNHN…TPLVAITITR (180 aa)) lie on the Extracellular side of the membrane. A sulfotyrosine mark is found at Y174 and Y184. N194 carries N-linked (GlcNAc...) asparagine glycosylation. O-linked (GalNAc...) serine glycosylation occurs at S266. A Sulfotyrosine modification is found at Y318. A helical transmembrane segment spans residues 341–360 (LVVGFLLPSVIMIACYSFIV). The Cytoplasmic portion of the chain corresponds to 361-377 (FRMQRGRFAKSQSKTFR). A helical membrane pass occupies residues 378–400 (VAVVVVAVFLVCWTPYHIFGVLS). Residues 401 to 417 (LLTDPETPLGKTLMSWD) lie on the Extracellular side of the membrane. The chain crosses the membrane as a helical span at residues 418–438 (HVCIALASANSCFNPFLYALL). The Cytoplasmic portion of the chain corresponds to 439–482 (GKDFRKKARQSIQGILEAAFSEELTRSTHCPSNNVISERNSTTV). S459 is subject to Phosphoserine. The residue at position 463 (T463) is a Phosphothreonine.

This sequence belongs to the G-protein coupled receptor 1 family. Interacts with VGF-derived peptide TLQP-21. In terms of processing, among the sulfation sites Tyr-174 is essential for binding of C3a anaphylatoxin. O-glycosylated. As to expression, widely expressed in several differentiated hematopoietic cell lines, in the lung, spleen, ovary, placenta, small intestine, throughout the brain, heart, and endothelial cells. Mostly expressed in lymphoid tissues.

The protein resides in the cell membrane. Receptor for the chemotactic and inflammatory peptide anaphylatoxin C3a. This receptor stimulates chemotaxis, granule enzyme release and superoxide anion production. This is C3a anaphylatoxin chemotactic receptor (C3AR1) from Homo sapiens (Human).